A 499-amino-acid chain; its full sequence is Argininosuccinate lyase (499 aa).

The tract at residues 1–22 (MSDGEDHETANADDRDETVVRR) is disordered. Over residues 7-22 (HETANADDRDETVVRR) the composition is skewed to basic and acidic residues.

The protein belongs to the lyase 1 family. Argininosuccinate lyase subfamily.

The protein resides in the cytoplasm. It carries out the reaction 2-(N(omega)-L-arginino)succinate = fumarate + L-arginine. It functions in the pathway amino-acid biosynthesis; L-arginine biosynthesis; L-arginine from L-ornithine and carbamoyl phosphate: step 3/3. In Haloarcula marismortui (strain ATCC 43049 / DSM 3752 / JCM 8966 / VKM B-1809) (Halobacterium marismortui), this protein is Argininosuccinate lyase.